Here is a 212-residue protein sequence, read N- to C-terminus: Large ribosomal subunit protein mL48 (212 aa).

The N-terminal 28 residues, 1-28 (MNGALGKVLCLKNDTIFKQAFSLLRFRT), are a transit peptide targeting the mitochondrion. K199 is subject to N6-succinyllysine.

This sequence belongs to the mitochondrion-specific ribosomal protein mL48 family. Component of the mitochondrial ribosome large subunit (39S) which comprises a 16S rRNA and about 50 distinct proteins. Interacts with OXA1L.

The protein localises to the mitochondrion. The polypeptide is Large ribosomal subunit protein mL48 (MRPL48) (Bos taurus (Bovine)).